A 701-amino-acid polypeptide reads, in one-letter code: Elongation factor G (701 aa).

The tr-type G domain maps to 8–291; the sequence is SRYRNIGIVA…AVIDYLPAPI (284 aa). Residues 17 to 24, 89 to 93, and 143 to 146 contribute to the GTP site; these read AHVDAGKT, DTPGH, and NKMD.

This sequence belongs to the TRAFAC class translation factor GTPase superfamily. Classic translation factor GTPase family. EF-G/EF-2 subfamily.

It localises to the cytoplasm. In terms of biological role, catalyzes the GTP-dependent ribosomal translocation step during translation elongation. During this step, the ribosome changes from the pre-translocational (PRE) to the post-translocational (POST) state as the newly formed A-site-bound peptidyl-tRNA and P-site-bound deacylated tRNA move to the P and E sites, respectively. Catalyzes the coordinated movement of the two tRNA molecules, the mRNA and conformational changes in the ribosome. This is Elongation factor G from Pseudomonas syringae pv. tomato (strain ATCC BAA-871 / DC3000).